A 118-amino-acid polypeptide reads, in one-letter code: Deoxynogalonate monooxygenase (118 aa).

The ABM domain maps to 14–100 (VTFVNRFTVH…ALSTSEHGLF (87 aa)).

In terms of assembly, homodimer.

It catalyses the reaction deoxynogalonate + O2 = nogalonate + H2O + H(+). It participates in antibiotic biosynthesis. In terms of biological role, involved in the biosynthesis of the anthracycline (aromatic polyketide) antibiotic nogalamycin. Catalyzes the oxygenation of 12-deoxy-nogalonic acid at position 12 to yield nogalonic acid. This chain is Deoxynogalonate monooxygenase, found in Streptomyces nogalater.